The chain runs to 528 residues: Probable rhamnogalacturonate lyase A (528 aa).

The N-terminal stretch at 1 to 20 is a signal peptide; the sequence is MFFQTGLLLSLSLWTKVAYA. Disulfide bonds link C50/C93 and C184/C193. The N-linked (GlcNAc...) asparagine glycan is linked to N56. N-linked (GlcNAc...) asparagine glycosylation is present at N351.

This sequence belongs to the polysaccharide lyase 4 family.

It localises to the secreted. It catalyses the reaction Endotype eliminative cleavage of L-alpha-rhamnopyranosyl-(1-&gt;4)-alpha-D-galactopyranosyluronic acid bonds of rhamnogalacturonan I domains in ramified hairy regions of pectin leaving L-rhamnopyranose at the reducing end and 4-deoxy-4,5-unsaturated D-galactopyranosyluronic acid at the non-reducing end.. Functionally, pectinolytic enzymes consist of four classes of enzymes: pectin lyase, polygalacturonase, pectin methylesterase and rhamnogalacturonase. Degrades the rhamnogalacturonan I (RG-I) backbone of pectin. Active against linseed rhamnogalacturonan. The protein is Probable rhamnogalacturonate lyase A (rglA) of Aspergillus clavatus (strain ATCC 1007 / CBS 513.65 / DSM 816 / NCTC 3887 / NRRL 1 / QM 1276 / 107).